The chain runs to 150 residues: Ribosome maturation factor RimP (150 aa).

Belongs to the RimP family.

It localises to the cytoplasm. Functionally, required for maturation of 30S ribosomal subunits. This Francisella tularensis subsp. mediasiatica (strain FSC147) protein is Ribosome maturation factor RimP.